Consider the following 507-residue polypeptide: ATP synthase subunit alpha, plastid (507 aa).

Position 170–177 (170–177 (GDRQTGKT)) interacts with ATP.

It belongs to the ATPase alpha/beta chains family. As to quaternary structure, F-type ATPases have 2 components, CF(1) - the catalytic core - and CF(0) - the membrane proton channel. CF(1) has five subunits: alpha(3), beta(3), gamma(1), delta(1), epsilon(1). CF(0) has four main subunits: a, b, b' and c.

It localises to the plastid membrane. It catalyses the reaction ATP + H2O + 4 H(+)(in) = ADP + phosphate + 5 H(+)(out). Its function is as follows. Produces ATP from ADP in the presence of a proton gradient across the membrane. The alpha chain is a regulatory subunit. The chain is ATP synthase subunit alpha, plastid from Cuscuta gronovii (Common dodder).